The chain runs to 257 residues: Phosphonates import ATP-binding protein PhnC (257 aa).

Residues 4 to 248 enclose the ABC transporter domain; the sequence is IEFKDVSKVY…VFNHIYGRSI (245 aa).

This sequence belongs to the ABC transporter superfamily. Phosphonates importer (TC 3.A.1.9.1) family. As to quaternary structure, the complex is composed of two ATP-binding proteins (PhnC), two transmembrane proteins (PhnE) and a solute-binding protein (PhnD).

It is found in the cell membrane. It catalyses the reaction phosphonate(out) + ATP + H2O = phosphonate(in) + ADP + phosphate + H(+). Functionally, part of the ABC transporter complex PhnCDE involved in phosphonates import. Responsible for energy coupling to the transport system. The sequence is that of Phosphonates import ATP-binding protein PhnC from Staphylococcus epidermidis (strain ATCC 35984 / DSM 28319 / BCRC 17069 / CCUG 31568 / BM 3577 / RP62A).